The following is a 162-amino-acid chain: Phosphopantetheine adenylyltransferase (162 aa).

Substrate is bound at residue threonine 10. ATP is bound by residues 10 to 11 and histidine 18; that span reads TF. The substrate site is built by lysine 42, leucine 74, and arginine 88. ATP contacts are provided by residues 89–91, glutamate 99, and 124–130; these read GLR and FSCISST.

Belongs to the bacterial CoaD family. As to quaternary structure, homohexamer. Mg(2+) is required as a cofactor.

It localises to the cytoplasm. The catalysed reaction is (R)-4'-phosphopantetheine + ATP + H(+) = 3'-dephospho-CoA + diphosphate. The protein operates within cofactor biosynthesis; coenzyme A biosynthesis; CoA from (R)-pantothenate: step 4/5. Its function is as follows. Reversibly transfers an adenylyl group from ATP to 4'-phosphopantetheine, yielding dephospho-CoA (dPCoA) and pyrophosphate. The sequence is that of Phosphopantetheine adenylyltransferase from Francisella philomiragia subsp. philomiragia (strain ATCC 25017 / CCUG 19701 / FSC 153 / O#319-036).